A 94-amino-acid chain; its full sequence is Putative FXYD domain-containing ion transport regulator 8 (94 aa).

The signal sequence occupies residues 1-18 (MEVVLIFVYSLLVPVVLA). At 19–34 (SAAKEKEIDPFHYNYQ) the chain is on the extracellular side. A helical membrane pass occupies residues 35–58 (TLRIGGLVFDVVLFLVPSCHLLSH). Residues 59-94 (RCKCSFNQKPQDPGDKEAQVENFITANAKEPQKAKN) lie on the Cytoplasmic side of the membrane. The interval 66–94 (QKPQDPGDKEAQVENFITANAKEPQKAKN) is disordered.

Belongs to the FXYD family.

Its subcellular location is the membrane. The protein is Putative FXYD domain-containing ion transport regulator 8 (FXYD6P3) of Homo sapiens (Human).